Consider the following 336-residue polypeptide: Malate dehydrogenase, cytoplasmic (336 aa).

Residues 11 to 17 (GAAGQIG) and aspartate 42 each bind NAD(+). Substrate-binding residues include arginine 92 and arginine 98. NAD(+)-binding positions include asparagine 105, glutamine 112, and 129–131 (VGN). Asparagine 131 and arginine 163 together coordinate substrate. The active-site Proton acceptor is the histidine 188.

It belongs to the LDH/MDH superfamily. MDH type 2 family. Homodimer.

Its subcellular location is the cytoplasm. It carries out the reaction (S)-malate + NAD(+) = oxaloacetate + NADH + H(+). Catalyzes the reversible conversion of (S)-malate to oxaloacetate in the cytoplasm where oxaloacetate is used for gluconeogenesis. This Caenorhabditis elegans protein is Malate dehydrogenase, cytoplasmic.